Here is a 244-residue protein sequence, read N- to C-terminus: Carbonyl reductase [NADPH] 2 (244 aa).

An NADP(+)-binding site is contributed by 11 to 39; it reads LVTGAGKGIGRDTVKALHASGAKVVAVTR. Phosphoserine is present on Ser42. Ser136 contacts substrate. The active-site Proton acceptor is Tyr149. Ser176 bears the Phosphoserine mark.

Belongs to the short-chain dehydrogenases/reductases (SDR) family. Homotetramer. As to expression, predominantly expressed in lung, in ciliated cells, non-ciliated bronchiolar cells and type-II alveolar pneumocytes. Also detected in adipose tissue (at protein level). Low expression in testis, heart, kidney, spleen, brain and liver.

The protein resides in the mitochondrion matrix. The enzyme catalyses a secondary alcohol + NADP(+) = a ketone + NADPH + H(+). Its function is as follows. May function in the pulmonary metabolism of endogenous carbonyl compounds, such as aliphatic aldehydes and ketones derived from lipid peroxidation, 3-ketosteroids and fatty aldehydes, as well as in xenobiotic metabolism. The protein is Carbonyl reductase [NADPH] 2 (Cbr2) of Mus musculus (Mouse).